A 589-amino-acid polypeptide reads, in one-letter code: Sentrin-specific protease 2 (589 aa).

The Nuclear localization signal motif lies at 28 to 31; sequence KRRR. Position 32 is a phosphoserine (S32). Positions 46 to 51 match the Nuclear localization signal motif; it reads PAKRPR. Positions 71-382 are axin-binding; it reads GFPFQLTTKP…EKEISNALGH (312 aa). Disordered regions lie at residues 148-179 and 191-210; these read SFGF…LMWK and EESG…GVQK. The Nuclear export signal signature appears at 317–332; it reads LEPDLSEEVSARLRLG. Phosphoserine is present on residues S333 and S344. The segment at 395-559 is protease; that stretch reads LRITRGDIQT…MFTCKYADYI (165 aa). Catalysis depends on residues H478 and D495. The active-site Nucleophile is the C548.

Belongs to the peptidase C48 family. As to quaternary structure, binds to SUMO2 and SUMO3. Interacts with the C-terminal domain of NUP153 via its N-terminus. Interacts with MTA1. Post-translationally, polyubiquitinated; which leads to proteasomal degradation.

The protein resides in the nucleus. It is found in the nuclear pore complex. It localises to the nucleus membrane. The protein localises to the cytoplasm. Its function is as follows. Protease that catalyzes two essential functions in the SUMO pathway. The first is the hydrolysis of an alpha-linked peptide bond at the C-terminal end of the small ubiquitin-like modifier (SUMO) propeptides, SUMO1, SUMO2 and SUMO3 leading to the mature form of the proteins. The second is the deconjugation of SUMO1, SUMO2 and SUMO3 from targeted proteins, by cleaving an epsilon-linked peptide bond between the C-terminal glycine of the mature SUMO and the lysine epsilon-amino group of the target protein. May down-regulate CTNNB1 levels and thereby modulate the Wnt pathway. Deconjugates SUMO2 from MTA1. Plays a dynamic role in adipogenesis by desumoylating and promoting the stabilization of CEBPB. Acts as a regulator of the cGAS-STING pathway by catalyzing desumoylation of CGAS and STING1 during the late phase of viral infection. In Pongo abelii (Sumatran orangutan), this protein is Sentrin-specific protease 2 (SENP2).